The following is a 496-amino-acid chain: MFNYERPKHFIQPQNPCGSRLQPPGPEVSGFPSQTKQSSIVIQPRQCTEQRFSASSTVSSHITVSSSAYPAPQQLAGPNPGQKVTATYNQSPASFLSSILPSQPDYCNSKIPSTVDSNYQQSSVNQPVNAMSSQAANARPTPKTPDHEIQGSKEALIQDLERKLKCKDTLLHNGNQRLTYEEKMARRLLGPQNAAAVFQAQNSDVQDSPQHNPEQARLHVPTSQVRSRSSSRAEANDQDAIQEKFYPPRFIQVPENMSIEEGRFCRMDFKVSGLPAPDVSWYLNGRPVQSDELHKMIVSEKGFHSLIFEVVRASDAGPYACVARNRAGEATFTVQLDVLAKEHKRAPMFIFKPQSKKVFEGETVKLECQISAIPPPKLFWKRNNEMVQFNTDRISLYHDNAGRVTLLIKDVNKKDAGWYTVSAVNEAGVTTCNTRLDVTARPIQTLPAPKQLRVRPTFSKYLALNGRGLDVKQAFNPEGEFQRLAAQSGLYESEEL.

A disordered region spans residues 1–37 (MFNYERPKHFIQPQNPCGSRLQPPGPEVSGFPSQTKQ). Position 20 is an omega-N-methylarginine (Arg20). The necessary for interaction with ACTN1 stretch occupies residues 78 to 149 (PNPGQKVTAT…PTPKTPDHEI (72 aa)). Polar residues-rich tracts occupy residues 202-213 (NSDVQDSPQHNP) and 221-233 (PTSQ…SSRA). The interval 202 to 239 (NSDVQDSPQHNPEQARLHVPTSQVRSRSSSRAEANDQD) is disordered. The interval 213–491 (PEQARLHVPT…QRLAAQSGLY (279 aa)) is necessary for interaction with FLNC. The interval 213-496 (PEQARLHVPT…QSGLYESEEL (284 aa)) is necessary for interaction with ACTA1. Ig-like C2-type domains follow at residues 248–333 (PRFI…ATFT) and 347–439 (PMFI…LDVT).

The protein belongs to the myotilin/palladin family. As to quaternary structure, homodimer. Interacts with ACTA1, ACTN1, FLNA, FLNB, FLNC, and MYOZ2. Interacts with the C-terminal region of MYOZ1. As to expression, expressed in skeletal muscle (at protein level).

The protein localises to the cell membrane. It localises to the sarcolemma. It is found in the cytoplasm. The protein resides in the cytoskeleton. Its subcellular location is the myofibril. The protein localises to the sarcomere. It localises to the z line. Its function is as follows. Component of a complex of multiple actin cross-linking proteins. Involved in the control of myofibril assembly and stability at the Z lines in muscle cells. The chain is Myotilin (Myot) from Mus musculus (Mouse).